The primary structure comprises 159 residues: Ribosome maturation factor RimP (159 aa).

Belongs to the RimP family.

The protein resides in the cytoplasm. Its function is as follows. Required for maturation of 30S ribosomal subunits. In Streptococcus pneumoniae serotype 2 (strain D39 / NCTC 7466), this protein is Ribosome maturation factor RimP.